A 127-amino-acid chain; its full sequence is Photosystem II reaction center Psb28 protein (127 aa).

The segment at 108-127 is disordered; it reads LGYSQSQDSDQTEGADNQQA. The span at 109-127 shows a compositional bias: polar residues; that stretch reads GYSQSQDSDQTEGADNQQA.

It belongs to the Psb28 family. As to quaternary structure, part of the photosystem II complex.

Its subcellular location is the cellular thylakoid membrane. This is Photosystem II reaction center Psb28 protein from Synechococcus sp. (strain CC9605).